The following is a 111-amino-acid chain: Phosphoribosyl-ATP pyrophosphatase (111 aa).

It belongs to the PRA-PH family.

The protein resides in the cytoplasm. It catalyses the reaction 1-(5-phospho-beta-D-ribosyl)-ATP + H2O = 1-(5-phospho-beta-D-ribosyl)-5'-AMP + diphosphate + H(+). The protein operates within amino-acid biosynthesis; L-histidine biosynthesis; L-histidine from 5-phospho-alpha-D-ribose 1-diphosphate: step 2/9. This Azotobacter vinelandii (strain DJ / ATCC BAA-1303) protein is Phosphoribosyl-ATP pyrophosphatase.